We begin with the raw amino-acid sequence, 161 residues long: Arachidonate 5-lipoxygenase-activating protein (161 aa).

At 1–8 (MDQEAVGN) the chain is on the lumenal side. A helical transmembrane segment spans residues 9 to 30 (VVLLAIVTLISVVQNAFFAHKV). At 31–52 (ELESKAQSGRSFQRTGTLAFER) the chain is on the cytoplasmic side. The chain crosses the membrane as a helical span at residues 53–77 (VYTANQNCVDAYPTFLVVLWTAGLL). The Lumenal portion of the chain corresponds to 78-80 (CSQ). The helical transmembrane segment at 81 to 102 (VPAAFAGLMYLFVRQKYFVGYL) threads the bilayer. The Cytoplasmic portion of the chain corresponds to 103–107 (GERTQ). An intramembrane segment occupies 108–115 (STPGYIFG). Residues 116-128 (KRIILFLFLMSLA) form a helical membrane-spanning segment. Over 129–161 (GILNHYLIFFFGSDFENYIRTITTTISPLLLIP) the chain is Lumenal.

Belongs to the MAPEG family. Homotrimer. Interacts with LTC4S and ALOX5.

The protein localises to the nucleus membrane. Its subcellular location is the endoplasmic reticulum membrane. Its function is as follows. Required for leukotriene biosynthesis by ALOX5 (5-lipoxygenase). Anchors ALOX5 to the membrane. Binds arachidonic acid, and could play an essential role in the transfer of arachidonic acid to ALOX5. Binds to MK-886, a compound that blocks the biosynthesis of leukotrienes. This Rattus norvegicus (Rat) protein is Arachidonate 5-lipoxygenase-activating protein (Alox5ap).